We begin with the raw amino-acid sequence, 382 residues long: Dual-specificity RNA methyltransferase RlmN (382 aa).

Glu-91 functions as the Proton acceptor in the catalytic mechanism. In terms of domain architecture, Radical SAM core spans 97 to 339; the sequence is ETDRGTLCIS…TTVRKTRGDD (243 aa). Cys-104 and Cys-344 form a disulfide bridge. The [4Fe-4S] cluster site is built by Cys-111, Cys-115, and Cys-118. S-adenosyl-L-methionine-binding positions include 165–166, Ser-197, 219–221, and Asn-301; these read GE and SLH. Cys-344 serves as the catalytic S-methylcysteine intermediate.

It belongs to the radical SAM superfamily. RlmN family. [4Fe-4S] cluster is required as a cofactor.

The protein resides in the cytoplasm. It carries out the reaction adenosine(2503) in 23S rRNA + 2 reduced [2Fe-2S]-[ferredoxin] + 2 S-adenosyl-L-methionine = 2-methyladenosine(2503) in 23S rRNA + 5'-deoxyadenosine + L-methionine + 2 oxidized [2Fe-2S]-[ferredoxin] + S-adenosyl-L-homocysteine. The enzyme catalyses adenosine(37) in tRNA + 2 reduced [2Fe-2S]-[ferredoxin] + 2 S-adenosyl-L-methionine = 2-methyladenosine(37) in tRNA + 5'-deoxyadenosine + L-methionine + 2 oxidized [2Fe-2S]-[ferredoxin] + S-adenosyl-L-homocysteine. Its function is as follows. Specifically methylates position 2 of adenine 2503 in 23S rRNA and position 2 of adenine 37 in tRNAs. m2A2503 modification seems to play a crucial role in the proofreading step occurring at the peptidyl transferase center and thus would serve to optimize ribosomal fidelity. This is Dual-specificity RNA methyltransferase RlmN from Polaromonas sp. (strain JS666 / ATCC BAA-500).